Reading from the N-terminus, the 381-residue chain is Dynactin subunit 2 (381 aa).

A disordered region spans residues 15–39 (DQPDVYETPDAPESETSDFYDEEPA). Residues 24–39 (DAPESETSDFYDEEPA) are compositionally biased toward acidic residues. 2 coiled-coil regions span residues 100-216 (QKCL…AVGA) and 350-381 (GVQE…EKVK).

It belongs to the dynactin subunit 2 family. In terms of assembly, subunit of dynactin, a multiprotein complex associated with dynein.

It is found in the cytoplasm. The protein localises to the cytoskeleton. The protein resides in the membrane. Its function is as follows. Modulates cytoplasmic dynein binding to an organelle, and plays a role in prometaphase chromosome alignment and spindle organization during mitosis. The polypeptide is Dynactin subunit 2 (Aedes aegypti (Yellowfever mosquito)).